Reading from the N-terminus, the 143-residue chain is Putative complexin-1 (143 aa).

The segment at 16–72 (EVTGGLGMKDDGGEKTETGEDPEVIAARLEQEERRKEKHRKMENEREKMRQGIRDKY) is disordered. 2 stretches are compositionally biased toward basic and acidic residues: residues 23–33 (MKDDGGEKTET) and 44–72 (LEQE…RDKY). The stretch at 40-71 (IAARLEQEERRKEKHRKMENEREKMRQGIRDK) forms a coiled coil.

Belongs to the complexin/synaphin family.

Its subcellular location is the cytoplasm. It localises to the cytosol. In terms of biological role, positively regulates a late step in synaptic vesicle exocytosis. The polypeptide is Putative complexin-1 (cpx-1) (Caenorhabditis elegans).